We begin with the raw amino-acid sequence, 151 residues long: S-protein homolog 1 (151 aa).

The first 18 residues, 1-18 (MNCIKQFLLAICFSLALT), serve as a signal peptide directing secretion.

Belongs to the plant self-incompatibility (S1) protein family. Restricted to floral tissues.

The protein localises to the secreted. The protein is S-protein homolog 1 of Arabidopsis thaliana (Mouse-ear cress).